The sequence spans 916 residues: DNA topoisomerase 1 alpha (916 aa).

The tract at residues 1–369 (MGTETVSKPV…SSPSSGDGQK (369 aa)) is disordered. The span at 34–47 (SNSNQSKSNSQRSK) shows a compositional bias: low complexity. Residues 60–76 (PVTSPNGTTPSNKTSIV) show a composition bias toward polar residues. The span at 77-93 (KSSMPSSSSKASPAKSP) shows a compositional bias: low complexity. Over residues 102-119 (VKDRSQLQKDQSECKIEH) the composition is skewed to basic and acidic residues. Positions 130–148 (SILSGNKGPTSSRQVSSPQ) are enriched in polar residues. Residues 149–168 (PEKKNNGDRPLDRASRIIKD) show a composition bias toward basic and acidic residues. The residue at position 170 (S170) is a Phosphoserine. Over residues 230–239 (KNSSADQSSL) the composition is skewed to polar residues. The span at 253–267 (MKQDSVKKEIDDKGR) shows a compositional bias: basic and acidic residues. A compositionally biased stretch (acidic residues) spans 285–294 (GTDDDDDDDV). T286 is modified (phosphothreonine). Positions 354–366 (YSTSSKSSPSSGD) are enriched in low complexity. 3 interaction with DNA regions span residues 577–578 (KY), 640–645 (RAGNEK), and 731–733 (TAK). Positions 584-914 (GSSLKGLSDK…MDVEPEYRFS (331 aa)) constitute a Topo IB-type catalytic domain. The stretch at 778 to 860 (QRTVSKTHGA…ERDMHTKEDL (83 aa)) forms a coiled coil. Catalysis depends on Y872, which acts as the O-(3'-phospho-DNA)-tyrosine intermediate.

The protein belongs to the type IB topoisomerase family. In terms of assembly, interacts with DEK3. Expressed in inflorescence meristems. Expressed in primordia of sepals, petals, stamens, carpels and ovules. Expressed in midstage embryos.

The protein resides in the nucleus. The enzyme catalyses ATP-independent breakage of single-stranded DNA, followed by passage and rejoining.. In terms of biological role, releases the supercoiling and torsional tension of DNA introduced during the DNA replication and transcription by transiently cleaving and rejoining one strand of the DNA duplex. Introduces a single-strand break via transesterification at a target site in duplex DNA. The scissile phosphodiester is attacked by the catalytic tyrosine of the enzyme, resulting in the formation of a DNA-(3'-phosphotyrosyl)-enzyme intermediate and the expulsion of a 5'-OH DNA strand. The free DNA strand then rotates around the intact phosphodiester bond on the opposing strand, thus removing DNA supercoils. Finally, in the religation step, the DNA 5'-OH attacks the covalent intermediate to expel the active-site tyrosine and restore the DNA phosphodiester backbone. Can complement a TOP1-deficient yeast mutant. Plays a critical role in the maintenance of a regular pattern of organ initiation. Topoisomerases I enzymes (TOP1A and TOP1B) are essential for plant survival. Functions together with the stem cell maintenance gene WUSCHEL (WUS) in stem cell regulation. Required to maintain developmentally regulated gene repression. Functions synergistically with chromatin remodeling factors. Is required for the repression of WUS expression in flower development. Plays a role in polycomb group (PcG) protein-mediated histone H3 trimethylation on 'Lys-27' (H3K27me3) at the WUS gene locus. H3K27me3 induces transcriptional repression of WUS. May assist AGAMOUS (AG) in recruiting PcG proteins to WUS locus. Reduces nucleosome density, especially at genes that are targets of PcG proteins. Plays a role in epigenetic silencing. Involved in RNA-directed DNA methylation (RdDM) by promoting Pol V transcription to generate long non-coding RNA transcripts. Is dispensable for Pol IV-mediated small interfering RNA (siRNA) biogenesis. Promotes transposable element (TE) silencing at endogenous RdDM target loci through histone H3 dimethylation of 'Lys-9' (H3K9me2). Promotes the production of Pol V-dependent long non-coding transcripts that facilitate the recruitment of siRNA-AGO4 and AGO4 occupancy at TEs. The sequence is that of DNA topoisomerase 1 alpha from Arabidopsis thaliana (Mouse-ear cress).